We begin with the raw amino-acid sequence, 210 residues long: Thymidylate kinase (210 aa).

Position 11–18 (11–18 (GVDGAGKT)) interacts with ATP.

It belongs to the thymidylate kinase family.

It catalyses the reaction dTMP + ATP = dTDP + ADP. Its function is as follows. Phosphorylation of dTMP to form dTDP in both de novo and salvage pathways of dTTP synthesis. In Mycoplasma pneumoniae (strain ATCC 29342 / M129 / Subtype 1) (Mycoplasmoides pneumoniae), this protein is Thymidylate kinase (tmk).